Here is a 430-residue protein sequence, read N- to C-terminus: Argininosuccinate lyase (430 aa).

The protein belongs to the lyase 1 family. Argininosuccinate lyase subfamily.

It localises to the cytoplasm. The enzyme catalyses 2-(N(omega)-L-arginino)succinate = fumarate + L-arginine. It participates in amino-acid biosynthesis; L-arginine biosynthesis; L-arginine from L-ornithine and carbamoyl phosphate: step 3/3. The protein is Argininosuccinate lyase of Sorangium cellulosum (strain So ce56) (Polyangium cellulosum (strain So ce56)).